The following is a 95-amino-acid chain: Phosphoribosyl-ATP pyrophosphatase (95 aa).

Belongs to the PRA-PH family.

The protein resides in the cytoplasm. The catalysed reaction is 1-(5-phospho-beta-D-ribosyl)-ATP + H2O = 1-(5-phospho-beta-D-ribosyl)-5'-AMP + diphosphate + H(+). The protein operates within amino-acid biosynthesis; L-histidine biosynthesis; L-histidine from 5-phospho-alpha-D-ribose 1-diphosphate: step 2/9. In Methanosphaera stadtmanae (strain ATCC 43021 / DSM 3091 / JCM 11832 / MCB-3), this protein is Phosphoribosyl-ATP pyrophosphatase.